A 138-amino-acid polypeptide reads, in one-letter code: Venom allergen 2 (138 aa).

A signal peptide spans 1–19; sequence MKSFVLATCLLGFAQIIYA. 3 cysteine pairs are disulfide-bonded: cysteine 34–cysteine 57, cysteine 81–cysteine 94, and cysteine 101–cysteine 122.

The protein belongs to the ant venom allergen 2/4 family. As to quaternary structure, homodimer; disulfide-linked. In terms of tissue distribution, expressed by the venom gland.

It localises to the secreted. This is Venom allergen 2 from Solenopsis invicta (Red imported fire ant).